A 229-amino-acid chain; its full sequence is Flagellar L-ring protein (229 aa).

Residues 1–25 form the signal peptide; sequence MKQVRLLPSATVRAACAVAVAALAG. Cys-26 carries the N-palmitoyl cysteine lipid modification. The S-diacylglycerol cysteine moiety is linked to residue Cys-26.

It belongs to the FlgH family. The basal body constitutes a major portion of the flagellar organelle and consists of four rings (L,P,S, and M) mounted on a central rod.

Its subcellular location is the cell outer membrane. It localises to the bacterial flagellum basal body. Its function is as follows. Assembles around the rod to form the L-ring and probably protects the motor/basal body from shearing forces during rotation. The chain is Flagellar L-ring protein from Burkholderia vietnamiensis (strain G4 / LMG 22486) (Burkholderia cepacia (strain R1808)).